Here is a 1335-residue protein sequence, read N- to C-terminus: Bifunctional autolysin (1335 aa).

The first 29 residues, 1-29 (MAKKFNYKLPSMVALTLFGTAFTAHQANA), serve as a signal peptide directing secretion. 3 disordered regions span residues 51-88 (QAEK…QSTT), 100-262 (NEIS…KYKE), and 514-535 (WGTT…NNKL). Composition is skewed to polar residues over residues 58-88 (EVTQ…QSTT), 100-127 (NEIS…VTKN), 143-155 (TDTN…QSVA), 176-223 (TASQ…NASG), and 244-258 (SLNN…TTSY). Residues 303 to 863 (VSSQKTSSLP…LSTQSTPAPK (561 aa)) are N-acetylmuramoyl-L-alanine amidase. Low complexity predominate over residues 515–531 (GTTSTKPSQPSKPSGGT). GW domains are found at residues 533–610 (NKLT…YNTA), 612–686 (APVK…TASK), 700–774 (TVTN…YNTA), 776–850 (SPVK…APSK), 868–943 (STQT…TQNI), 945–1020 (KQTQ…QNST), and 1023–1096 (QSTP…KEKI). The interval 864–1335 (QVKPSTQTVN…GKYFEIPIYK (472 aa)) is endo-beta-N-acetylglucosaminidase.

The protein in the N-terminal section; belongs to the N-acetylmuramoyl-L-alanine amidase 2 family. It in the C-terminal section; belongs to the glycosyl hydrolase 73 family. In terms of assembly, oligomer; forms a ring structure at the cell surface which is important for efficient partitioning of daughter cells after cell division. Undergoes proteolytic processing to generate the two extracellular lytic enzymes, probably at the septal region on the cell surface.

Its subcellular location is the secreted. The enzyme catalyses Hydrolyzes the link between N-acetylmuramoyl residues and L-amino acid residues in certain cell-wall glycopeptides.. It catalyses the reaction an N(4)-(oligosaccharide-(1-&gt;3)-[oligosaccharide-(1-&gt;6)]-beta-D-Man-(1-&gt;4)-beta-D-GlcNAc-(1-&gt;4)-alpha-D-GlcNAc)-L-asparaginyl-[protein] + H2O = an oligosaccharide-(1-&gt;3)-[oligosaccharide-(1-&gt;6)]-beta-D-Man-(1-&gt;4)-D-GlcNAc + N(4)-(N-acetyl-beta-D-glucosaminyl)-L-asparaginyl-[protein]. Endohydrolysis of the di-N-acetylchitobiosyl unit in high-mannose glycopeptides and glycoproteins containing the -[(Man)5(GlcNAc)2]-Asn structure. One N-acetyl-D-glucosamine residue remains attached to the protein; the rest of the oligosaccharide is released intact. Cleaves the peptidoglycan connecting the daughter cells at the end of the cell division cycle, resulting in the separation of the two newly divided cells. Acts as an autolysin in penicillin-induced lysis. The polypeptide is Bifunctional autolysin (atl) (Staphylococcus epidermidis (strain ATCC 12228 / FDA PCI 1200)).